The chain runs to 151 residues: Putative pre-16S rRNA nuclease (151 aa).

Belongs to the YqgF nuclease family.

It is found in the cytoplasm. In terms of biological role, could be a nuclease involved in processing of the 5'-end of pre-16S rRNA. The polypeptide is Putative pre-16S rRNA nuclease (Prochlorococcus marinus (strain MIT 9515)).